A 230-amino-acid polypeptide reads, in one-letter code: Probable fimbrial chaperone SfmC (230 aa).

A signal peptide spans 1 to 23 (MMTKIKLLMLIIFYLIISASAHA).

This sequence belongs to the periplasmic pilus chaperone family.

It is found in the periplasm. Functionally, part of the sfmACDHF fimbrial operon. Could contribute to adhesion to various surfaces in specific environmental niches. Increases adhesion to eukaryotic T24 bladder epithelial cells in the absence of fim genes. This is Probable fimbrial chaperone SfmC (sfmC) from Escherichia coli (strain K12).